The chain runs to 598 residues: Elongation factor 4 (598 aa).

The tr-type G domain maps to 2 to 184 (KNIRNFSIIA…EIVAKIPAPE (183 aa)). Residues 14 to 19 (DHGKST) and 131 to 134 (NKID) contribute to the GTP site.

This sequence belongs to the TRAFAC class translation factor GTPase superfamily. Classic translation factor GTPase family. LepA subfamily.

It localises to the cell inner membrane. The catalysed reaction is GTP + H2O = GDP + phosphate + H(+). Required for accurate and efficient protein synthesis under certain stress conditions. May act as a fidelity factor of the translation reaction, by catalyzing a one-codon backward translocation of tRNAs on improperly translocated ribosomes. Back-translocation proceeds from a post-translocation (POST) complex to a pre-translocation (PRE) complex, thus giving elongation factor G a second chance to translocate the tRNAs correctly. Binds to ribosomes in a GTP-dependent manner. In Haemophilus influenzae (strain 86-028NP), this protein is Elongation factor 4.